The sequence spans 201 residues: MLEKFTVIRGKAVPLRGEDIDTDRILPARFMKVLTFEGLGQYLFYDERFDEKGNPKPHPLNDPRYRGATILLVESGFGSGSSREHAPQAIKRAGFKAIIGESFAEIFFGNATAIGLPCVSLSPEDLGVLFRSVEENPELEVEIDLVNQEVRFGDRTAPLSIREEAREALVEGLWDPIGELLEAGELLDQFDQKLPYPRRTE.

This sequence belongs to the LeuD family. LeuD type 1 subfamily. As to quaternary structure, heterodimer of LeuC and LeuD.

The enzyme catalyses (2R,3S)-3-isopropylmalate = (2S)-2-isopropylmalate. It participates in amino-acid biosynthesis; L-leucine biosynthesis; L-leucine from 3-methyl-2-oxobutanoate: step 2/4. Catalyzes the isomerization between 2-isopropylmalate and 3-isopropylmalate, via the formation of 2-isopropylmaleate. The polypeptide is 3-isopropylmalate dehydratase small subunit (Thermus thermophilus (strain ATCC BAA-163 / DSM 7039 / HB27)).